The primary structure comprises 282 residues: Pantothenate synthetase (282 aa).

Residue Met30–His37 participates in ATP binding. The active-site Proton donor is His37. Residue Gln61 coordinates (R)-pantoate. Beta-alanine is bound at residue Gln61. Gly147 to Asp150 serves as a coordination point for ATP. Gln153 is a (R)-pantoate binding site. Residues Val176 and Met184–Arg187 each bind ATP.

It belongs to the pantothenate synthetase family. Homodimer.

It localises to the cytoplasm. It catalyses the reaction (R)-pantoate + beta-alanine + ATP = (R)-pantothenate + AMP + diphosphate + H(+). Its pathway is cofactor biosynthesis; (R)-pantothenate biosynthesis; (R)-pantothenate from (R)-pantoate and beta-alanine: step 1/1. Functionally, catalyzes the condensation of pantoate with beta-alanine in an ATP-dependent reaction via a pantoyl-adenylate intermediate. The chain is Pantothenate synthetase from Geotalea daltonii (strain DSM 22248 / JCM 15807 / FRC-32) (Geobacter daltonii).